The chain runs to 467 residues: Inactive pancreatic lipase-related protein 1 (467 aa).

A signal peptide spans 1–17 (MLIFWTITLFLLGAAKG). 2 disulfide bridges follow: Cys-21/Cys-27 and Cys-109/Cys-120. The active-site Nucleophile is Ser-171. The active-site Charge relay system is Asp-194. The Ca(2+) site is built by Glu-205, Arg-208, Asp-210, and Asp-213. A disulfide bridge links Cys-255 with Cys-279. The Charge relay system role is filled by His-281. 3 cysteine pairs are disulfide-bonded: Cys-303–Cys-314, Cys-317–Cys-322, and Cys-451–Cys-467. The PLAT domain occupies 356-467 (WRYGVSITLS…EDTLLTLTPC (112 aa)).

It belongs to the AB hydrolase superfamily. Lipase family. As to expression, pancreas.

It localises to the secreted. Functionally, may function as inhibitor of dietary triglyceride digestion. Lacks detectable lipase activity towards triglycerides, diglycerides, phosphatidylcholine, galactolipids or cholesterol esters (in vitro). This is Inactive pancreatic lipase-related protein 1 (PNLIPRP1) from Homo sapiens (Human).